Here is a 408-residue protein sequence, read N- to C-terminus: Cytochrome bc1 complex Rieske iron-sulfur subunit (408 aa).

The next 3 membrane-spanning stretches (helical) occupy residues 56-76 (VTFW…TYIF), 98-118 (MLGI…VLYV), and 162-182 (LIMG…IAPM). A Rieske domain is found at 293–390 (HGPRNAVMLI…ITVDEEGYLI (98 aa)). [2Fe-2S] cluster-binding residues include C333, H335, C352, and H355. C338 and C354 form a disulfide bridge.

This sequence belongs to the Rieske iron-sulfur protein family. The cytochrome bc1 complex is composed of a cytochrome b (QcrB), the Rieske iron-sulfur protein (QcrA) and a diheme cytochrome c (QcrC) subunit. The bc1 complex forms a supercomplex with cytochrome c oxidase (cytochrome aa3). Requires [2Fe-2S] cluster as cofactor.

The protein localises to the cell membrane. In terms of biological role, iron-sulfur subunit of the cytochrome bc1 complex, an essential component of the respiratory electron transport chain required for ATP synthesis. The bc1 complex catalyzes the oxidation of menaquinol and the reduction of cytochrome c in the respiratory chain. The bc1 complex operates through a Q-cycle mechanism that couples electron transfer to generation of the proton gradient that drives ATP synthesis. The protein is Cytochrome bc1 complex Rieske iron-sulfur subunit (qcrA) of Corynebacterium glutamicum (strain ATCC 13032 / DSM 20300 / JCM 1318 / BCRC 11384 / CCUG 27702 / LMG 3730 / NBRC 12168 / NCIMB 10025 / NRRL B-2784 / 534).